A 187-amino-acid chain; its full sequence is ATP synthase subunit b 2 (187 aa).

Positions 1-12 (MAQERAEHESAD) are enriched in basic and acidic residues. The segment at 1–31 (MAQERAEHESADQHTTSTGVPHEGQGEPFPP) is disordered. The helical transmembrane segment at 40–60 (LLIWLAISFLLLYALMSKLVL) threads the bilayer.

It belongs to the ATPase B chain family. In terms of assembly, F-type ATPases have 2 components, F(1) - the catalytic core - and F(0) - the membrane proton channel. F(1) has five subunits: alpha(3), beta(3), gamma(1), delta(1), epsilon(1). F(0) has three main subunits: a(1), b(2) and c(10-14). The alpha and beta chains form an alternating ring which encloses part of the gamma chain. F(1) is attached to F(0) by a central stalk formed by the gamma and epsilon chains, while a peripheral stalk is formed by the delta and b chains.

Its subcellular location is the cell inner membrane. Functionally, f(1)F(0) ATP synthase produces ATP from ADP in the presence of a proton or sodium gradient. F-type ATPases consist of two structural domains, F(1) containing the extramembraneous catalytic core and F(0) containing the membrane proton channel, linked together by a central stalk and a peripheral stalk. During catalysis, ATP synthesis in the catalytic domain of F(1) is coupled via a rotary mechanism of the central stalk subunits to proton translocation. Component of the F(0) channel, it forms part of the peripheral stalk, linking F(1) to F(0). The b'-subunit is a diverged and duplicated form of b found in plants and photosynthetic bacteria. The protein is ATP synthase subunit b 2 (atpF2) of Beijerinckia indica subsp. indica (strain ATCC 9039 / DSM 1715 / NCIMB 8712).